A 735-amino-acid chain; its full sequence is 1,4-alpha-glucan branching enzyme GlgB 1 (735 aa).

The active-site Nucleophile is the aspartate 418. Residue glutamate 471 is the Proton donor of the active site.

It belongs to the glycosyl hydrolase 13 family. GlgB subfamily. Monomer.

It carries out the reaction Transfers a segment of a (1-&gt;4)-alpha-D-glucan chain to a primary hydroxy group in a similar glucan chain.. Its pathway is glycan biosynthesis; glycogen biosynthesis. Its function is as follows. Catalyzes the formation of the alpha-1,6-glucosidic linkages in glycogen by scission of a 1,4-alpha-linked oligosaccharide from growing alpha-1,4-glucan chains and the subsequent attachment of the oligosaccharide to the alpha-1,6 position. This chain is 1,4-alpha-glucan branching enzyme GlgB 1, found in Rhizobium johnstonii (strain DSM 114642 / LMG 32736 / 3841) (Rhizobium leguminosarum bv. viciae).